Reading from the N-terminus, the 665-residue chain is Pentatricopeptide repeat-containing protein At3g02490, mitochondrial (665 aa).

Residues 1–37 constitute a mitochondrion transit peptide; sequence MRYQWRSLLFRSYRSSPRPFLSHHSRFQVISNSTRSF. PPR repeat units lie at residues 280–314, 315–349, 352–388, 389–423, 424–458, 459–493, 495–530, and 536–570; these read DEKTYNAMARVLGKEKFLDRFQHMIEEIRSAGYEM, EMETYVRVSARFCQTKMIKEAVELFEFAMAGSISN, TPHCCSLLLKKIVTAKKLDMDLFTRTLKAYTGNGNVV, PDVMLQHVLKSLRSVDRFGQSNEVLKAMNEGGYVP, SGDLQSVIASGLSRKGKKDEANELVNFMEASGNHL, DDKAMASLVEGHCDAKDLEEASECFKKMIGKEGVS, AGYAFEKLVLAYCNSFQARDVYKLFSELVKQNQLKP, and KIMVRNLLMKKVARDGGFEEALSLLPMMRNHGFPP.

It belongs to the PPR family. P subfamily.

It is found in the mitochondrion. This chain is Pentatricopeptide repeat-containing protein At3g02490, mitochondrial, found in Arabidopsis thaliana (Mouse-ear cress).